The chain runs to 275 residues: Large ribosomal subunit protein uL2cz (275 aa).

Disordered regions lie at residues 1 to 22 (MAIH…DSQV) and 226 to 275 (NPVD…RRRK).

Belongs to the universal ribosomal protein uL2 family. Part of the 50S ribosomal subunit.

The protein resides in the plastid. Its subcellular location is the chloroplast. This is Large ribosomal subunit protein uL2cz (rpl2-A) from Chloranthus spicatus (Chulantree).